A 493-amino-acid polypeptide reads, in one-letter code: Solute carrier family 2, facilitated glucose transporter member 3 (493 aa).

At 1-10 (MGTAKVTPSL) the chain is on the cytoplasmic side. Residues 11–32 (VFAVTVATIGSFQFGYNTGVIN) form a helical membrane-spanning segment. Topologically, residues 33 to 64 (APETIIKDFLNYTLEERLEDLPREGLLTTLWS) are extracellular. A glycan (N-linked (GlcNAc...) asparagine) is linked at asparagine 43. The chain crosses the membrane as a helical span at residues 65–85 (LCVAIFSVGGMIGSFSVGLFV). At 86–90 (NRFGR) the chain is on the cytoplasmic side. The helical transmembrane segment at 91-111 (RNSMLLVNLIAILGGCLMGFA) threads the bilayer. Topologically, residues 112 to 118 (KIAESVE) are extracellular. The chain crosses the membrane as a helical span at residues 119–142 (MLILGRLIIGIFCGLCTGFVPMYI). Topologically, residues 143 to 153 (GEVSPTALRGA) are cytoplasmic. The chain crosses the membrane as a helical span at residues 154-174 (FGTLNQLGIVVGILVAQVFGL). Glutamine 159 is a binding site for D-glucose. At 175-183 (DFILGSEEL) the chain is on the extracellular side. Residues 184–204 (WPGLLGLTIIPAILQSAALPF) form a helical membrane-spanning segment. The Cytoplasmic segment spans residues 205–269 (CPESPRFLLI…LFKSPSYFQP (65 aa)). Threonine 232 carries the post-translational modification Phosphothreonine. Residues 270–290 (LLISVVLQLSQQFSGINAVFY) traverse the membrane as a helical segment. Positions 277 to 279 (QLS) are important for selectivity against fructose. D-glucose is bound by residues 280–281 (QQ) and asparagine 286. At 291–304 (YSTGIFQDAGVQEP) the chain is on the extracellular side. A helical transmembrane segment spans residues 305–325 (IYATIGAGVVNTIFTVVSLFL). Residue asparagine 315 coordinates D-glucose. Residues 326 to 331 (VERAGR) lie on the Cytoplasmic side of the membrane. Residues 332–352 (RTLHMIGLGGMAVCSVFMTIS) traverse the membrane as a helical segment. Topologically, residues 353 to 363 (LLLKDEYEAMS) are extracellular. A helical membrane pass occupies residues 364-389 (FVCIVAILVYVAFFEIGPGPIPWFIV). D-glucose contacts are provided by glutamate 378 and tryptophan 386. Residues 390–399 (AELFSQGPRP) are Cytoplasmic-facing. Residues 400–420 (AAMAVAGCSNWTSNFLVGMFF) traverse the membrane as a helical segment. Topologically, residues 421–429 (PSAAAYLGA) are extracellular. Residues 430–450 (YVFIIFAAFLVFFLIFTSFKV) traverse the membrane as a helical segment. Topologically, residues 451–493 (PETKGRTFEDITRAFEGQAHSGKGSAGVELNSMQPVKETPGNA) are cytoplasmic. A phosphoserine mark is found at serine 471, serine 475, and serine 482. Threonine 489 bears the Phosphothreonine mark.

The protein belongs to the major facilitator superfamily. Sugar transporter (TC 2.A.1.1) family. Glucose transporter subfamily. Interacts with SMIM43; the interaction may promote SLC2A3-mediated glucose transport to meet the energy needs of mesendoderm differentiation. Brain and osteoblastic cells (at protein level). Highly expressed in brain.

The protein resides in the cell membrane. It is found in the perikaryon. Its subcellular location is the cell projection. It catalyses the reaction D-glucose(out) = D-glucose(in). The enzyme catalyses D-galactose(in) = D-galactose(out). Deoxyglucose transport is inhibited by D-glucose, D-galactose and maltose. Galactose transport is inhibited by D-glucose and maltose. Its function is as follows. Facilitative glucose transporter. Can also mediate the uptake of various other monosaccharides across the cell membrane. Mediates the uptake of glucose, 2-deoxyglucose, galactose, mannose, xylose and fucose, and probably also dehydroascorbate. Does not mediate fructose transport. Required for mesendoderm differentiation. The polypeptide is Solute carrier family 2, facilitated glucose transporter member 3 (Rattus norvegicus (Rat)).